The sequence spans 429 residues: Cell wall protein ECM33 (429 aa).

The signal sequence occupies residues 1–19 (MQFKNALTATAILSASALA). Asn-21, Asn-56, Asn-82, Asn-196, Asn-209, Asn-227, Asn-234, Asn-241, Asn-267, Asn-279, Asn-304, and Asn-328 each carry an N-linked (GlcNAc...) asparagine glycan. At Ser-339 the chain carries Phosphoserine. Residues 361-401 (LSSTSTESSKSSATSSASSSGDASNAQANVSASASSSSSSS) show a composition bias toward low complexity. The tract at residues 361–410 (LSSTSTESSKSSATSSASSSGDASNAQANVSASASSSSSSSKKSKGAAPE) is disordered. Asn-389 is a glycosylation site (N-linked (GlcNAc...) asparagine). Gly-406 carries GPI-anchor amidated glycine lipidation. A propeptide spans 407–429 (AAPELVPATSFMGVVAAVGVALL) (removed in mature form).

Belongs to the SPS2 family. The GPI-anchor is attached to the protein in the endoplasmic reticulum and serves to target the protein to the cell surface. There, the glucosamine-inositol phospholipid moiety is cleaved off and the GPI-modified mannoprotein is covalently attached via its lipidless GPI glycan remnant to the 1,6-beta-glucan of the outer cell wall layer. Post-translationally, extensively N-glycosylated.

The protein resides in the cell membrane. The protein localises to the secreted. Its subcellular location is the cell wall. In terms of biological role, required for proper cell wall integrity and for the correct assembly of the mannoprotein outer layer of the cell wall. Important for apical bud growth. The polypeptide is Cell wall protein ECM33 (ECM33) (Saccharomyces cerevisiae (strain ATCC 204508 / S288c) (Baker's yeast)).